The chain runs to 316 residues: HTH-type transcriptional regulator cbl (316 aa).

The HTH lysR-type domain maps to 1–59 (MNFQQLKIIREAARQDYNLTEVANMLYTSQSGVSRHIRELEEELGIEIFIRRGKRLLGM). The H-T-H motif DNA-binding region spans 19–38 (LTEVANMLYTSQSGVSRHIR).

Belongs to the LysR transcriptional regulatory family.

Its function is as follows. May be an accessory regulatory protein within the cys regulon. This chain is HTH-type transcriptional regulator cbl (cbl), found in Klebsiella aerogenes (Enterobacter aerogenes).